A 592-amino-acid polypeptide reads, in one-letter code: Aspartate--tRNA(Asp/Asn) ligase (592 aa).

Glutamate 175 is an L-aspartate binding site. The segment at 199–202 (QLFK) is aspartate. Arginine 221 provides a ligand contact to L-aspartate. Residues 221 to 223 (RDE) and glutamine 230 each bind ATP. Histidine 450 is an L-aspartate binding site. Glutamate 483 is an ATP binding site. Residue arginine 490 participates in L-aspartate binding. ATP is bound at residue 535–538 (GLDR).

It belongs to the class-II aminoacyl-tRNA synthetase family. Type 1 subfamily. Homodimer.

Its subcellular location is the cytoplasm. It catalyses the reaction tRNA(Asx) + L-aspartate + ATP = L-aspartyl-tRNA(Asx) + AMP + diphosphate. Its function is as follows. Aspartyl-tRNA synthetase with relaxed tRNA specificity since it is able to aspartylate not only its cognate tRNA(Asp) but also tRNA(Asn). Reaction proceeds in two steps: L-aspartate is first activated by ATP to form Asp-AMP and then transferred to the acceptor end of tRNA(Asp/Asn). This is Aspartate--tRNA(Asp/Asn) ligase from Acinetobacter baumannii (strain ATCC 17978 / DSM 105126 / CIP 53.77 / LMG 1025 / NCDC KC755 / 5377).